A 510-amino-acid chain; its full sequence is UDP-N-acetylmuramoyl-tripeptide--D-alanyl-D-alanine ligase (510 aa).

136 to 142 (GSSGKTS) provides a ligand contact to ATP.

The protein belongs to the MurCDEF family. MurF subfamily.

It is found in the cytoplasm. The catalysed reaction is D-alanyl-D-alanine + UDP-N-acetyl-alpha-D-muramoyl-L-alanyl-gamma-D-glutamyl-meso-2,6-diaminopimelate + ATP = UDP-N-acetyl-alpha-D-muramoyl-L-alanyl-gamma-D-glutamyl-meso-2,6-diaminopimeloyl-D-alanyl-D-alanine + ADP + phosphate + H(+). The protein operates within cell wall biogenesis; peptidoglycan biosynthesis. Functionally, involved in cell wall formation. Catalyzes the final step in the synthesis of UDP-N-acetylmuramoyl-pentapeptide, the precursor of murein. The polypeptide is UDP-N-acetylmuramoyl-tripeptide--D-alanyl-D-alanine ligase (Mycobacterium bovis (strain ATCC BAA-935 / AF2122/97)).